The sequence spans 174 residues: CASP-like protein 4D2 (174 aa).

At 1 to 14 the chain is on the cytoplasmic side; the sequence is MAPPPPSPPPVSLK. The helical transmembrane segment at 15 to 35 threads the bilayer; that stretch reads VSLLLLRVLTGVFLVIALIIL. Over 36–60 the chain is Extracellular; sequence STNSVTIVSQGSALKFHFKDVYAYR. Residues 61 to 81 traverse the membrane as a helical segment; sequence YMLSAAVIGLLYAVIQLFFTI. At 82-150 the chain is on the cytoplasmic side; sequence SEFATGMKNP…FFSRGYASAS (69 aa). The chain crosses the membrane as a helical span at residues 151 to 171; sequence LLLFSFICLAVLSVFSSLAIA. The Extracellular portion of the chain corresponds to 172–174; that stretch reads KRN.

It belongs to the Casparian strip membrane proteins (CASP) family. Homodimer and heterodimers.

The protein resides in the cell membrane. The protein is CASP-like protein 4D2 of Arabidopsis lyrata subsp. lyrata (Lyre-leaved rock-cress).